Consider the following 463-residue polypeptide: Argininosuccinate lyase (463 aa).

The protein belongs to the lyase 1 family. Argininosuccinate lyase subfamily.

Its subcellular location is the cytoplasm. It catalyses the reaction 2-(N(omega)-L-arginino)succinate = fumarate + L-arginine. It participates in amino-acid biosynthesis; L-arginine biosynthesis; L-arginine from L-ornithine and carbamoyl phosphate: step 3/3. The protein is Argininosuccinate lyase of Streptococcus pneumoniae serotype 2 (strain D39 / NCTC 7466).